A 503-amino-acid polypeptide reads, in one-letter code: Medium/long-chain-fatty-acid--CoA ligase FadD17 (503 aa).

Belongs to the ATP-dependent AMP-binding enzyme family.

It catalyses the reaction a medium-chain fatty acid + ATP + CoA = a medium-chain fatty acyl-CoA + AMP + diphosphate. It carries out the reaction a long-chain fatty acid + ATP + CoA = a long-chain fatty acyl-CoA + AMP + diphosphate. Its pathway is lipid metabolism; fatty acid biosynthesis. Catalyzes the activation of medium/long-chain fatty acids as acyl-coenzyme A (acyl-CoA), which are then transferred to the multifunctional polyketide synthase (PKS) type III for further chain extension. The polypeptide is Medium/long-chain-fatty-acid--CoA ligase FadD17 (fadD17) (Mycobacterium marinum (strain ATCC BAA-535 / M)).